A 188-amino-acid chain; its full sequence is Adenine phosphoribosyltransferase (188 aa).

Belongs to the purine/pyrimidine phosphoribosyltransferase family. As to quaternary structure, homodimer.

The protein localises to the cytoplasm. The catalysed reaction is AMP + diphosphate = 5-phospho-alpha-D-ribose 1-diphosphate + adenine. It functions in the pathway purine metabolism; AMP biosynthesis via salvage pathway; AMP from adenine: step 1/1. Functionally, catalyzes a salvage reaction resulting in the formation of AMP, that is energically less costly than de novo synthesis. The sequence is that of Adenine phosphoribosyltransferase from Burkholderia ambifaria (strain MC40-6).